A 996-amino-acid chain; its full sequence is Cilia- and flagella-associated protein 251 (996 aa).

WD repeat units lie at residues 73–114 (GHCN…PKKT), 118–164 (PHPN…EPCL), 168–211 (EFDR…KGFN), 219–258 (PSLKVLTQTVFIPDNTQVVTGTTDGHIIVWDISLIIEKVD), 282–319 (KGSNSINILKIQDNYLVIGSSNGSIRFYDFQYRIIAWF), 399–438 (SIVSPIIAMSCRPNSNVIGICCENGYLYEWNFQEKSSVLS), 445–485 (TDKE…WQNS), 494–533 (QGKPKVNMQVFSSDSKNLATMDADYAVSLFTIDHRQFDVN), 547–593 (IHHS…YSKQ), 615–658 (EQET…FKFC), and 719–759 (AHPD…LEQI). The tract at residues 971 to 996 (DLEGEERDDNIEDQYEDEENEEYDQD) is disordered.

The protein resides in the cell projection. Its subcellular location is the cilium. As component of a spoke-associated complex, regulates ciliary mobility by mediating a stable and functional assembly of the radial spoke 3 (RS3). The protein is Cilia- and flagella-associated protein 251 of Tetrahymena thermophila (strain SB210).